A 338-amino-acid chain; its full sequence is MSTLRLLISDSYDPWFNLAVEECIFRQMPATQRVLFLWRNADTVVIGRAQNPWKECNTRRMEEDNVRLARRSSGGGAVFHDLGNTCFTFMAGKPEYDKTISTSIVLNALNALGVSAEASGRNDLVVKTAEGDRKVSGSAYRETKDRGFHHGTLLLNSDLSRLANYLNPDKKKLAAKGITSVRSRVTNLTELLPGITHEQVCEAITEAFFAHYGERVEAEIISPDKTPDLPNFAETFARQSSWEWNFGQAPAFSHLLDERFTWGGVELHFDVEKGHITRAQVFTDSLNPAPLEALAGRLQGCLYRADMLQQECEALLVDFPEQEKELRELSAWMAGAVR.

Residues 29-216 (PATQRVLFLW…AFFAHYGERV (188 aa)) form the BPL/LPL catalytic domain. ATP contacts are provided by residues arginine 71, 76 to 79 (GAVF), and lysine 134. Residue lysine 134 participates in (R)-lipoate binding.

Belongs to the LplA family. Monomer.

Its subcellular location is the cytoplasm. The catalysed reaction is L-lysyl-[lipoyl-carrier protein] + (R)-lipoate + ATP = N(6)-[(R)-lipoyl]-L-lysyl-[lipoyl-carrier protein] + AMP + diphosphate + H(+). It participates in protein modification; protein lipoylation via exogenous pathway; protein N(6)-(lipoyl)lysine from lipoate: step 1/2. Its pathway is protein modification; protein lipoylation via exogenous pathway; protein N(6)-(lipoyl)lysine from lipoate: step 2/2. Catalyzes both the ATP-dependent activation of exogenously supplied lipoate to lipoyl-AMP and the transfer of the activated lipoyl onto the lipoyl domains of lipoate-dependent enzymes. The sequence is that of Lipoate-protein ligase A from Escherichia coli O6:K15:H31 (strain 536 / UPEC).